The sequence spans 275 residues: Formamidopyrimidine-DNA glycosylase (275 aa).

Pro-2 (schiff-base intermediate with DNA) is an active-site residue. Glu-3 functions as the Proton donor in the catalytic mechanism. The active-site Proton donor; for beta-elimination activity is the Lys-59. DNA is bound by residues His-92, Arg-111, and Lys-155. Residues 240–274 (YVYGQTGEPCRRCGHEIEKMKLGGRGTHYCPHCQQ) form an FPG-type zinc finger. Arg-264 acts as the Proton donor; for delta-elimination activity in catalysis.

The protein belongs to the FPG family. Monomer. The cofactor is Zn(2+).

It catalyses the reaction Hydrolysis of DNA containing ring-opened 7-methylguanine residues, releasing 2,6-diamino-4-hydroxy-5-(N-methyl)formamidopyrimidine.. The catalysed reaction is 2'-deoxyribonucleotide-(2'-deoxyribose 5'-phosphate)-2'-deoxyribonucleotide-DNA = a 3'-end 2'-deoxyribonucleotide-(2,3-dehydro-2,3-deoxyribose 5'-phosphate)-DNA + a 5'-end 5'-phospho-2'-deoxyribonucleoside-DNA + H(+). In terms of biological role, involved in base excision repair of DNA damaged by oxidation or by mutagenic agents. Acts as a DNA glycosylase that recognizes and removes damaged bases. Has a preference for oxidized purines, such as 7,8-dihydro-8-oxoguanine (8-oxoG). Has AP (apurinic/apyrimidinic) lyase activity and introduces nicks in the DNA strand. Cleaves the DNA backbone by beta-delta elimination to generate a single-strand break at the site of the removed base with both 3'- and 5'-phosphates. This is Formamidopyrimidine-DNA glycosylase from Exiguobacterium sp. (strain ATCC BAA-1283 / AT1b).